The sequence spans 230 residues: Protein LURP-one-related 11 (230 aa).

Belongs to the LOR family.

Might be related to the phospholipid scramblase and tubby-like superfamily of membrane tethered transcription factors. In Arabidopsis thaliana (Mouse-ear cress), this protein is Protein LURP-one-related 11.